We begin with the raw amino-acid sequence, 442 residues long: NALCN channel auxiliary factor 2 (442 aa).

Residues 42-62 traverse the membrane as a helical segment; that stretch reads LASLLFFTVLLSNHLWLVSAG. N-linked (GlcNAc...) asparagine glycosylation is found at N77, N100, N171, N279, and N354. Residues 406–426 form a helical membrane-spanning segment; the sequence is CVLVLMLLHTMASFSVVQNGV.

The protein belongs to the NALF family.

It is found in the membrane. Functionally, probable component of the NALCN channel complex, a channel that regulates the resting membrane potential and controls neuronal excitability. The sequence is that of NALCN channel auxiliary factor 2 (nalf2) from Xenopus tropicalis (Western clawed frog).